The following is a 459-amino-acid chain: Mitochondrial distribution and morphology protein 34 (459 aa).

One can recognise an SMP-LTD domain in the interval 1-190 (MSFRFNEAVF…LPSLIFNTSQ (190 aa)). The segment covering 338-347 (RSNSNDDNAK) has biased composition (basic and acidic residues). Residues 338–375 (RSNSNDDNAKPRRRKIKCKKTRTPSNLQSQGEQAVDDS) are disordered. A compositionally biased stretch (basic residues) spans 348–359 (PRRRKIKCKKTR).

This sequence belongs to the MDM34 family. In terms of assembly, component of the ER-mitochondria encounter structure (ERMES) or MDM complex, composed of MMM1, MDM10, MDM12 and MDM34. In terms of processing, ubiquitinated by a SCF (SKP1-CUL1-F-box protein) E3 ubiquitin-protein ligase complex containing the F-box protein MDM30. Ubiquitination is important for mitochondrial integrity.

It localises to the mitochondrion outer membrane. Its function is as follows. Component of the ERMES/MDM complex, which serves as a molecular tether to connect the endoplasmic reticulum (ER) and mitochondria. Components of this complex are involved in the control of mitochondrial shape and protein biogenesis, and function in nonvesicular lipid trafficking between the ER and mitochondria. MDM34 is required for the interaction of the ER-resident membrane protein MMM1 and the outer mitochondrial membrane-resident beta-barrel protein MDM10. In Saccharomyces cerevisiae (strain RM11-1a) (Baker's yeast), this protein is Mitochondrial distribution and morphology protein 34.